Here is a 341-residue protein sequence, read N- to C-terminus: Protein CbhE (341 aa).

Positions I287–E297 are enriched in acidic residues. The interval I287 to C341 is disordered. Positions E323 to A332 are enriched in basic and acidic residues.

Its subcellular location is the cytoplasm. Its function is as follows. May be involved in the pathogenesis of acute Q fever. This chain is Protein CbhE (cbhE), found in Coxiella burnetii (strain RSA 493 / Nine Mile phase I).